A 676-amino-acid chain; its full sequence is MAAHHRQNTAGRRKVQVSYVIRDEVEKYNRNGVNALQLDPALNRLFTAGRDSIIRIWSVNQHKQDPYIASMEHHTDWVNDVVLCCNGKTLISASSDTTVKVWNAHKGFCMSTLRTHKDYVKALAYAKDKELVASAGLDRQIFLWDVNTLTALTASNNTVTTSSLSGNKDSIYSLAMNQLGTIIVSGSTEKVLRVWDPRTCAKLMKLKGHTDNVKALLLHRDGTQCLSGSSDGTIRLWSLGQQRCIATYRVHDEGVWALQVNDAFTHVYSGGRDRKIYCTDLRNPDIRVLICEEKAPVLKMELDRSADPPPAIWVATTKSTVNKWTLKGIHNFRASGDYDNDCTNPITPLCTQPDQVIKGGASIIQCHILNDKRHILTKDTNNNVAYWDVLKACKVEDLGKVDFEDEIKKRFKMVYVPNWFSVDLKTGMLTITLDESDCFAAWVSAKDAGFSSPDGSDPKLNLGGLLLQALLEYWPRTHVTPMDEEENEVNHVSGGQESRVQKGNGYFQVPPHTPVIFGEAGGRTLFRLLCRDSGGETEAMLLNETVPQWVIDITVDKNMPKFNKIPFYLQPHASSGAKTLKKDRLSASDMLQVRKVMEHVYEKIINLDNESQTTSSSNNEKPEQEKEEDIAVLAEEKIELLCQDQVLDPNMDLRTVKHFIWKSGGDLTLHYRQKST.

Tyr28 carries the post-translational modification Phosphotyrosine. WD repeat units follow at residues 28-67 (YNRN…QDPY), 73-112 (HHTD…CMST), 115-154 (THKD…ALTA), 166-205 (GNKD…KLMK), 208-247 (GHTD…CIAT), 250-289 (VHDE…IRVL), 292-334 (EEKA…NFRA), and 358-397 (KGGA…KVED). N6-acetyllysine is present on Lys214. Lys578 carries the N6-acetyllysine modification. Residues 607–628 (LDNESQTTSSSNNEKPEQEKEE) are disordered. Residues 609–619 (NESQTTSSSNN) are compositionally biased toward low complexity. A Phosphothreonine modification is found at Thr613.

It belongs to the WD repeat WDR48 family. Interacts with USP46. Interacts with USP1. Interacts with USP12. Component of the USP12-WDR20-WDR48 deubiquitinating complex. Component of the USP12-DMWD-WDR48 deubiquitinating complex. Interacts with PHLPP1. Interacts with RAD51AP1; the interaction is direct and promotes formation of a trimeric complex with RAD51 via RAD51AP1. Interacts with ATAD5; the interaction regulates USP1-mediated PCNA deubiquitination. Interacts with RAD51; the interaction is enhanced under replication stress. Interacts with ITCH; the interaction is more efficient when both USP12 and WDR48/UAF1 are involved and may facilitate recruitment of the USP12 deubiquitinating complex to Notch.

Its subcellular location is the nucleus. It is found in the cytoplasm. The protein resides in the lysosome. It localises to the late endosome. Its function is as follows. Regulator of deubiquitinating complexes, which acts as a strong activator of USP1, USP12 and USP46. Enhances the USP1-mediated deubiquitination of FANCD2; USP1 being almost inactive by itself. Activates deubiquitination by increasing the catalytic turnover without increasing the affinity of deubiquitinating enzymes for the substrate. Also activates deubiquitinating activity of complexes containing USP12. Docks at the distal end of the USP12 fingers domain and induces a cascade of structural changes leading to the activation of the enzyme. Together with RAD51AP1, promotes DNA repair by stimulating RAD51-mediated homologous recombination. Binds single-stranded DNA (ssDNA) and double-stranded DNA (dsDNA). DNA-binding is required both for USP1-mediated deubiquitination of FANCD2 and stimulation of RAD51-mediated homologous recombination: both WDR48/UAF1 and RAD51AP1 have coordinated role in DNA-binding during these processes. Together with ATAD5 and by regulating USP1 activity, has a role in PCNA-mediated translesion synthesis (TLS) by deubiquitinating monoubiquitinated PCNA. Together with ATAD5, has a role in recruiting RAD51 to stalled forks during replication stress. The protein is WD repeat-containing protein 48 (Wdr48) of Mus musculus (Mouse).